We begin with the raw amino-acid sequence, 189 residues long: GTP cyclohydrolase 1 (189 aa).

Zn(2+)-binding residues include C80, H83, and C152.

It belongs to the GTP cyclohydrolase I family. As to quaternary structure, toroid-shaped homodecamer, composed of two pentamers of five dimers.

The enzyme catalyses GTP + H2O = 7,8-dihydroneopterin 3'-triphosphate + formate + H(+). It functions in the pathway cofactor biosynthesis; 7,8-dihydroneopterin triphosphate biosynthesis; 7,8-dihydroneopterin triphosphate from GTP: step 1/1. This Latilactobacillus sakei subsp. sakei (strain 23K) (Lactobacillus sakei subsp. sakei) protein is GTP cyclohydrolase 1.